Consider the following 1141-residue polypeptide: Isoleucine--tRNA ligase (1141 aa).

The 'HIGH' region motif lies at 50–60; the sequence is PSANGMPGIHH. The short motif at 689-693 is the 'KMSKS' region element; it reads KMSKR. Lys692 is a binding site for ATP.

The protein belongs to the class-I aminoacyl-tRNA synthetase family. IleS type 2 subfamily. Monomer. Requires Zn(2+) as cofactor.

It is found in the cytoplasm. The catalysed reaction is tRNA(Ile) + L-isoleucine + ATP = L-isoleucyl-tRNA(Ile) + AMP + diphosphate. Catalyzes the attachment of isoleucine to tRNA(Ile). As IleRS can inadvertently accommodate and process structurally similar amino acids such as valine, to avoid such errors it has two additional distinct tRNA(Ile)-dependent editing activities. One activity is designated as 'pretransfer' editing and involves the hydrolysis of activated Val-AMP. The other activity is designated 'posttransfer' editing and involves deacylation of mischarged Val-tRNA(Ile). The sequence is that of Isoleucine--tRNA ligase from Bacteroides fragilis (strain YCH46).